The following is a 717-amino-acid chain: Polyribonucleotide nucleotidyltransferase (717 aa).

Mg(2+) contacts are provided by Asp-486 and Asp-492. One can recognise a KH domain in the interval 553–612; the sequence is PRMITVKINPEKIRDVIGKGGSTIQALTKETGCTIDIQEDGTITIASTSSEGMAEAKRRI. The S1 motif domain maps to 622 to 690; that stretch reads GKIYSGTVLK…EKGRMRLSIK (69 aa). The disordered stretch occupies residues 690-717; it reads KAAKAEEGDVPATAPQAPGAGDATSQQQ.

It belongs to the polyribonucleotide nucleotidyltransferase family. Mg(2+) is required as a cofactor.

Its subcellular location is the cytoplasm. The catalysed reaction is RNA(n+1) + phosphate = RNA(n) + a ribonucleoside 5'-diphosphate. Functionally, involved in mRNA degradation. Catalyzes the phosphorolysis of single-stranded polyribonucleotides processively in the 3'- to 5'-direction. This Ralstonia nicotianae (strain ATCC BAA-1114 / GMI1000) (Ralstonia solanacearum) protein is Polyribonucleotide nucleotidyltransferase.